Here is a 529-residue protein sequence, read N- to C-terminus: MQQPRPVRRALLSVSDKAGIVDFARALSTRGVELLSTGGTARLLAEAGLPVTEVSDYTGFPEMMDGRVKTLHPKVHGGILGRRGQDDDIMAQHAISPIDMVVVNLYPFAQTVAREGCTLEDAVENIDIGGPTMVRSAAKNHKDVAIVVKSSDYTAIIDELDANNGSLTFDTRFDLAIKAFEHTAAYDSMIANYFGSLVPAYHGETTAPAGRFPRTLNLNFIKKQDMRYGENSHQQAAFYIEEEIKEASVATARQVQGKALSYNNIADTDAALECVKEFSEPACVIVKHANPCGVAVSSSILDAYDRAYKTDPTSAFGGIIAFNRELDAETAQAIVSRQFVEVIIAPSASDDALKITAAKQNVRVLVCGEWQSRVPGLDFKRVNGGLLVQDRDLGMVTEADLRVVTKRQPTEQELRDALFCWKVAKFVKSNAIVYARDNMTIGIGAGQMSRVYSAKIAGIKAGDEGLEVKGSAMASDAFFPFRDGIDAAAAVGITCVIQPGGSIRDDEVIAAADEHGIAMIFTDMRHFRH.

Residues 1–148 (MQQPRPVRRA…KNHKDVAIVV (148 aa)) enclose the MGS-like domain.

Belongs to the PurH family.

It carries out the reaction (6R)-10-formyltetrahydrofolate + 5-amino-1-(5-phospho-beta-D-ribosyl)imidazole-4-carboxamide = 5-formamido-1-(5-phospho-D-ribosyl)imidazole-4-carboxamide + (6S)-5,6,7,8-tetrahydrofolate. It catalyses the reaction IMP + H2O = 5-formamido-1-(5-phospho-D-ribosyl)imidazole-4-carboxamide. The protein operates within purine metabolism; IMP biosynthesis via de novo pathway; 5-formamido-1-(5-phospho-D-ribosyl)imidazole-4-carboxamide from 5-amino-1-(5-phospho-D-ribosyl)imidazole-4-carboxamide (10-formyl THF route): step 1/1. It participates in purine metabolism; IMP biosynthesis via de novo pathway; IMP from 5-formamido-1-(5-phospho-D-ribosyl)imidazole-4-carboxamide: step 1/1. This Cronobacter sakazakii (strain ATCC BAA-894) (Enterobacter sakazakii) protein is Bifunctional purine biosynthesis protein PurH.